The following is a 657-amino-acid chain: Histidine ammonia-lyase (657 aa).

A cross-link (5-imidazolinone (Ala-Gly)) is located at residues 253 to 255; the sequence is ASG. Serine 254 is modified (2,3-didehydroalanine (Ser)). Phosphothreonine is present on threonine 396. The residue at position 635 (serine 635) is a Phosphoserine. Threonine 637 carries the post-translational modification Phosphothreonine. Serine 648 is modified (phosphoserine).

The protein belongs to the PAL/histidase family. Post-translationally, contains an active site 4-methylidene-imidazol-5-one (MIO), which is formed autocatalytically by cyclization and dehydration of residues Ala-Ser-Gly. As to expression, liver and skin.

It carries out the reaction L-histidine = trans-urocanate + NH4(+). It participates in amino-acid degradation; L-histidine degradation into L-glutamate; N-formimidoyl-L-glutamate from L-histidine: step 1/3. The chain is Histidine ammonia-lyase (Hal) from Rattus norvegicus (Rat).